Reading from the N-terminus, the 270-residue chain is Hematopoietically-expressed homeobox protein HHEX (270 aa).

An interaction with SOX13 region spans residues 1–137; sequence MQYPHPGPAA…PFLQRPLHKR (137 aa). Residue Ser-53 is modified to Phosphoserine. Positions 137–196 form a DNA-binding region, homeobox; it reads RKGGQVRFSNDQTIELEKKFETQKYLSPPERKRLAKMLQLSERQVKTWFQNRRAKWRRLK. Positions 137-270 are required for WNT signaling induction; sequence RKGGQVRFSN…EGDKSYFNAG (134 aa). The disordered stretch occupies residues 194 to 270; it reads RLKQENPQSN…EGDKSYFNAG (77 aa). Residues 222 to 241 show a composition bias toward polar residues; it reads PSEQNKGASLDSSQCSPSPA. A compositionally biased stretch (acidic residues) spans 244–260; it reads EDLESEISEDSDQEVDI.

In terms of assembly, interacts with CD81; the interaction prevents nuclear translocation of HHEX. Interacts (via N-terminus) with SOX13; abolishes the SOX13-mediated inhibition of WNT-mediated transcriptional activity via competitive inhibition of the SOX13-TCF7 complex. Interacts with EIF4E; the interaction inhibits EIF4E-mediated mRNA nuclear export. Liver and promyelocytic leukemia cell line HL-60.

It localises to the nucleus. It is found in the nuclear body. The protein localises to the cytoplasm. In terms of biological role, recognizes the DNA sequence 5'-ATTAA-3'. Transcriptional repressor. Activator of WNT-mediated transcription in conjunction with CTNNB1. Establishes anterior identity at two levels; acts early to enhance canonical WNT-signaling by repressing expression of TLE4, and acts later to inhibit NODAL-signaling by directly targeting NODAL. Inhibits EIF4E-mediated mRNA nuclear export. May play a role in hematopoietic differentiation. In Homo sapiens (Human), this protein is Hematopoietically-expressed homeobox protein HHEX (HHEX).